The chain runs to 223 residues: UPF0758 protein Plut_0598 (223 aa).

The 123-residue stretch at arginine 100–leucine 222 folds into the MPN domain. Residues histidine 171, histidine 173, and aspartate 184 each contribute to the Zn(2+) site. Residues histidine 171 to aspartate 184 carry the JAMM motif motif.

The protein belongs to the UPF0758 family.

This chain is UPF0758 protein Plut_0598, found in Chlorobium luteolum (strain DSM 273 / BCRC 81028 / 2530) (Pelodictyon luteolum).